Reading from the N-terminus, the 310-residue chain is N-acetyl-gamma-glutamyl-phosphate reductase (310 aa).

C117 is an active-site residue.

Belongs to the NAGSA dehydrogenase family. Type 2 subfamily.

Its subcellular location is the cytoplasm. It carries out the reaction N-acetyl-L-glutamate 5-semialdehyde + phosphate + NADP(+) = N-acetyl-L-glutamyl 5-phosphate + NADPH + H(+). It functions in the pathway amino-acid biosynthesis; L-arginine biosynthesis; N(2)-acetyl-L-ornithine from L-glutamate: step 3/4. Its function is as follows. Catalyzes the NADPH-dependent reduction of N-acetyl-5-glutamyl phosphate to yield N-acetyl-L-glutamate 5-semialdehyde. The polypeptide is N-acetyl-gamma-glutamyl-phosphate reductase (Brucella suis (strain ATCC 23445 / NCTC 10510)).